Here is a 428-residue protein sequence, read N- to C-terminus: MLDIQFIREHPEVVKESQRKRGESVELVDEVLRADEERRSSLKQFEEARARQKEIGKQVAKAAPDEKAKLIAQTKELSEQVASFKASADTADEQYTTAMWQLSNIVEPQAPEGGEDDYVVMRKVGQIRDFAAEGFEPKDHLTLGEEVAGIDMKRGVKVSGSRFYFLRGDVARLQIAMLTMAVDQAQEHGFILAITPTLVRPEVMRGTGFLNSHADEIYRLREPDDDYLVGTSEVALAGMHENEILDLSDGPLRYCGWSSCYRREAGAAGKDTSGIIRVHQFDKVEMFVYAKPENSDAEHQKLLAMEEEMLAKVEVPYRVIDTAAGDLGSSAARKFDCEAWVPTQGRYRELTSTSNCTQYQARRLNIRERVADGGTSPVATLNGTLATTRWLVAILENHQQADGSIEIPKAMRPYMGGKEVIEPRKWEA.

231 to 233 (TSE) provides a ligand contact to L-serine. Residues 262–264 (RRE) and Val-278 each bind ATP. An L-serine-binding site is contributed by Glu-285. 349–352 (ELTS) lines the ATP pocket. Thr-384 contacts L-serine.

This sequence belongs to the class-II aminoacyl-tRNA synthetase family. Type-1 seryl-tRNA synthetase subfamily. Homodimer. The tRNA molecule binds across the dimer.

The protein localises to the cytoplasm. It catalyses the reaction tRNA(Ser) + L-serine + ATP = L-seryl-tRNA(Ser) + AMP + diphosphate + H(+). The enzyme catalyses tRNA(Sec) + L-serine + ATP = L-seryl-tRNA(Sec) + AMP + diphosphate + H(+). Its pathway is aminoacyl-tRNA biosynthesis; selenocysteinyl-tRNA(Sec) biosynthesis; L-seryl-tRNA(Sec) from L-serine and tRNA(Sec): step 1/1. Catalyzes the attachment of serine to tRNA(Ser). Is also able to aminoacylate tRNA(Sec) with serine, to form the misacylated tRNA L-seryl-tRNA(Sec), which will be further converted into selenocysteinyl-tRNA(Sec). This is Serine--tRNA ligase from Bifidobacterium animalis subsp. lactis (strain AD011).